A 434-amino-acid chain; its full sequence is UDP-N-acetylglucosamine 1-carboxyvinyltransferase 1 (434 aa).

22-23 (KN) provides a ligand contact to phosphoenolpyruvate. Arginine 93 lines the UDP-N-acetyl-alpha-D-glucosamine pocket. The active-site Proton donor is the cysteine 117. Cysteine 117 carries the 2-(S-cysteinyl)pyruvic acid O-phosphothioketal modification. Residues 122 to 126 (RPIDQ), aspartate 306, and valine 328 contribute to the UDP-N-acetyl-alpha-D-glucosamine site.

It belongs to the EPSP synthase family. MurA subfamily.

It localises to the cytoplasm. The enzyme catalyses phosphoenolpyruvate + UDP-N-acetyl-alpha-D-glucosamine = UDP-N-acetyl-3-O-(1-carboxyvinyl)-alpha-D-glucosamine + phosphate. The protein operates within cell wall biogenesis; peptidoglycan biosynthesis. In terms of biological role, cell wall formation. Adds enolpyruvyl to UDP-N-acetylglucosamine. The chain is UDP-N-acetylglucosamine 1-carboxyvinyltransferase 1 from Bacillus cereus (strain ATCC 10987 / NRS 248).